A 329-amino-acid chain; its full sequence is Meiotic drive suppressor wtf21 (329 aa).

Residues 1–68 (MKNNYTSLKS…RENNPSRSTD (68 aa)) form a disordered region. A compositionally biased stretch (basic and acidic residues) spans 19-30 (KTDHEIDLEKGP). 5 helical membrane passes run 73 to 95 (FLIK…ICYL), 110 to 132 (WTLF…YFYE), 165 to 182 (IIIW…FVYI), 192 to 214 (ALIC…VCIP), and 290 to 312 (GIAF…IRGA).

It belongs to the WTF family. In terms of assembly, homomer. Interacts with other proteins that exhibit high sequence similarity.

It localises to the spore membrane. The protein localises to the vacuole membrane. Functionally, acts as a suppressor component of the dual wtf meiotic drive system, and can suppress but not confer meiotic drive by compatible poisons. Wtf meiotic drive systems promote unequal transmission of alleles from the parental zygote to progeny spores by encoding a poison and an antidote from the same locus; the poison is trans-acting and forms toxic aggregates in all spores within an ascus, wherease the antidote is spore-specific and targets aggregates for degradation by the vacuole. Meiotic drive by wtf systems therefore lead to poisoning of all progeny that do not inherit the dual poison/antidote allele, or express a compatible antidote. This chain is Meiotic drive suppressor wtf21, found in Schizosaccharomyces pombe (strain 972 / ATCC 24843) (Fission yeast).